The primary structure comprises 852 residues: DNA mismatch repair protein MutS (852 aa).

602 to 609 (GPNMSGKS) contacts ATP.

Belongs to the DNA mismatch repair MutS family.

Its function is as follows. This protein is involved in the repair of mismatches in DNA. It is possible that it carries out the mismatch recognition step. This protein has a weak ATPase activity. The polypeptide is DNA mismatch repair protein MutS (Streptococcus thermophilus (strain CNRZ 1066)).